The primary structure comprises 656 residues: Pheromone-regulated membrane protein 2 (656 aa).

Transmembrane regions (helical) follow at residues 16–36 (FFSCIFHPLLLIFFTSVILTI), 320–340 (IIFTVMYFAFVILLMAIERIL), 422–442 (WIISNGAHLWLFGFLMLLIHW), and 634–654 (WGLLAVCLTILFHHMLIFIIL).

It localises to the membrane. The protein is Pheromone-regulated membrane protein 2 (PRM2) of Saccharomyces cerevisiae (strain ATCC 204508 / S288c) (Baker's yeast).